A 750-amino-acid chain; its full sequence is Nibrin (750 aa).

The FHA domain maps to 24 to 83 (YIVGRKNCAILIENDQSISRNHAVLRVNFPVTSLSQTDEIPTLTIKDNSKYGTFINEEKM). BRCT domains lie at 105–181 (KFRV…SEFL) and 224–315 (GKTF…LAVI). Residues 111 to 328 (EPLVVCSSCL…TESYCNPQGQ (218 aa)) form a mediates interaction with SP100 region. An interaction with MTOR, MAPKAP1 and RICTOR region spans residues 221-403 (IFKGKTFVFL…SRKLLQGTCN (183 aa)). The residue at position 337 (Thr-337) is a Phosphothreonine. Phosphoserine; by ATM is present on Ser-343. Phosphoserine is present on residues Ser-347 and Ser-433. Disordered stretches follow at residues 429-479 (NYQL…SSCK) and 494-550 (QPAG…RKRK). Lys-436 participates in a covalent cross-link: Glycyl lysine isopeptide (Lys-Gly) (interchain with G-Cter in ubiquitin). The segment covering 446-457 (WSSQQQLNSIKN) has biased composition (polar residues). The Nuclear localization signal motif lies at 461 to 467 (PCSRKRE). Positions 502–514 (KSKDHESQSETLD) are enriched in basic and acidic residues. 2 positions are modified to phosphoserine: Ser-508 and Ser-517. Residue Lys-528 forms a Glycyl lysine isopeptide (Lys-Gly) (interchain with G-Cter in SUMO2) linkage. Over residues 540-550 (STEDLRARKRK) the composition is skewed to basic and acidic residues. Residues Lys-569 and Lys-580 each participate in a glycyl lysine isopeptide (Lys-Gly) (interchain with G-Cter in SUMO2) cross-link. Residues 581–599 (QEADVSIRKKPRMDAERNQ) show a composition bias toward basic and acidic residues. The disordered stretch occupies residues 581–622 (QEADVSIRKKPRMDAERNQHLNGGPVPESNSALQEDETGKKD). Glycyl lysine isopeptide (Lys-Gly) (interchain with G-Cter in ubiquitin) cross-links involve residues Lys-683, Lys-687, and Lys-732. The short motif at 737–746 (ADDLFRYNPN) is the FxF/Y motif element.

This sequence belongs to the Nibrin family. Component of the MRN complex composed of two heterodimers RAD50 and MRE11 associated with a single NBN. The MRN complexes dimerize on DNA to form joined MRN-MRN oligomers required for DNA double-strand break repair. The MRN complexes dimerize on DNA to form joined MRN-MRN oligomers required for DNA double-strand break repair. As part of the MRN complex, interacts with MCM9; the interaction recruits the complex to DNA repair sites. Component of the BASC complex, at least composed of BRCA1, MSH2, MSH6, MLH1, ATM, BLM, RAD50, MRE11 and NBN. Interacts with histone H2AX; this requires phosphorylation of H2AX on 'Ser-139' and promotes NBN recruitment to DNA damage sites. Interacts with (phosphorylated) MDC1; promoting NBN recruitment to DNA damage sites. Interacts with (phosphorylated) RAD17; promoting NBN recruitment to DNA damage sites. Interacts (via FxF/Y motif) with ATM. Interacts with HJURP. Interacts with INTS3. Interacts with KPNA2. Interacts with TERF2; interaction is disrupted upon NBN phosphorylation by CDK2. Interacts with (phosphorylated) RBBP8/CtIP; the interaction links the role of the MRN complex in DNA double-strand break sensing to resection. Interacts with SP100; recruits NBN to PML bodies. Interacts with ATF2. Interacts with MTOR, MAPKAP1 isoform 2 and RICTOR; indicative for an association with the mTORC2 complex. Interacts with MRNIP. Interacts with UFL1; promoting UFL1 recruitment to double-strand breaks following DNA damage. Interacts with CYREN (via XLF motif). Phosphorylated by ATM in response of ionizing radiation, and such phosphorylation is responsible intra-S phase checkpoint control and telomere maintenance. Phosphorylated at Ser-433 by CDK2 in S/G2 phases abolishes interaction with TERF2, enabling DCLRE1B/Apollo recruitment to telomeres. Phosphorylation at Ser-433 in response to dysfunctional telomeres promotes non-homologous end joining repair at telomeres, while dephosphorylation by PPP1CA promotes microhomology-mediated end-joining (MMEJ) repair. In terms of processing, ubiquitinated at Lys-436 via 'Lys-6'-linked ubiquitin chains by RNF8, promoting NBN recruitment to DNA double-strand breaks (DSBs). Ubiquitinated at Lys-687 via 'Lys-63'-linked ubiquitin chains by PELI1: ubiquitination takes place following PELI1 phosphorylation and promotes ATM activation and DNA repair. Ubiquitinated at Lys-732 via 'Lys-63'-linked ubiquitin chains by the SCF(SKP2) complex: ubiquitination takes place following SKP2 phosphorylation and promotes ATM activation and DNA repair. In terms of tissue distribution, present at approximately equal levels in the heart at fetal day 17, at relatively constant levels at postnatal days 10, 17 and 21 and at slightly lower levels in the adult heart. Barely detectable in the brain. Not detected in kidney, very low levels in liver and skeletal muscle and moderate levels in heart, lung and brain (at protein level).

It is found in the nucleus. The protein resides in the chromosome. It localises to the PML body. Its subcellular location is the telomere. Component of the MRN complex, which plays a central role in double-strand break (DSB) repair, DNA recombination, maintenance of telomere integrity and meiosis. The MRN complex is involved in the repair of DNA double-strand breaks (DSBs) via homologous recombination (HR), an error-free mechanism which primarily occurs during S and G2 phases. The complex (1) mediates the end resection of damaged DNA, which generates proper single-stranded DNA, a key initial steps in HR, and is (2) required for the recruitment of other repair factors and efficient activation of ATM and ATR upon DNA damage. The MRN complex possesses single-strand endonuclease activity and double-strand-specific 3'-5' exonuclease activity, which are provided by MRE11, to initiate end resection, which is required for single-strand invasion and recombination. Within the MRN complex, NBN acts as a protein-protein adapter, which specifically recognizes and binds phosphorylated proteins, promoting their recruitment to DNA damage sites. Recruits MRE11 and RAD50 components of the MRN complex to DSBs in response to DNA damage. Promotes the recruitment of PI3/PI4-kinase family members ATM, ATR, and probably DNA-PKcs to the DNA damage sites, activating their functions. Mediates the recruitment of phosphorylated RBBP8/CtIP to DSBs, leading to cooperation between the MRN complex and RBBP8/CtIP to initiate end resection. RBBP8/CtIP specifically promotes the endonuclease activity of the MRN complex to clear DNA ends containing protein adducts. The MRN complex is also required for the processing of R-loops. NBN also functions in telomere length maintenance via its interaction with TERF2: interaction with TERF2 during G1 phase preventing recruitment of DCLRE1B/Apollo to telomeres. NBN also promotes DNA repair choice at dysfunctional telomeres: NBN phosphorylation by CK2 promotes non-homologous end joining repair at telomeres, while unphosphorylated NBN promotes microhomology-mediated end-joining (MMEJ) repair. Enhances AKT1 phosphorylation possibly by association with the mTORC2 complex. In Rattus norvegicus (Rat), this protein is Nibrin (Nbn).